We begin with the raw amino-acid sequence, 848 residues long: Protein translocase subunit SecA (848 aa).

ATP contacts are provided by residues Gln-86, Gly-104–Thr-108, and Asp-508. Residues Cys-833, Cys-835, Cys-844, and Cys-845 each contribute to the Zn(2+) site.

Belongs to the SecA family. In terms of assembly, monomer and homodimer. Part of the essential Sec protein translocation apparatus which comprises SecA, SecYEG and auxiliary proteins SecDF. Other proteins may also be involved. It depends on Zn(2+) as a cofactor.

It localises to the cell membrane. It is found in the cytoplasm. It catalyses the reaction ATP + H2O + cellular proteinSide 1 = ADP + phosphate + cellular proteinSide 2.. Part of the Sec protein translocase complex. Interacts with the SecYEG preprotein conducting channel. Has a central role in coupling the hydrolysis of ATP to the transfer of proteins into and across the cell membrane, serving as an ATP-driven molecular motor driving the stepwise translocation of polypeptide chains across the membrane. This Caldicellulosiruptor saccharolyticus (strain ATCC 43494 / DSM 8903 / Tp8T 6331) protein is Protein translocase subunit SecA.